A 284-amino-acid polypeptide reads, in one-letter code: 4-diphosphocytidyl-2-C-methyl-D-erythritol kinase (284 aa).

Lys14 is a catalytic residue. Residue 98–108 coordinates ATP; that stretch reads PMGGGLGGGSS. Residue Asp140 is part of the active site.

The protein belongs to the GHMP kinase family. IspE subfamily.

It carries out the reaction 4-CDP-2-C-methyl-D-erythritol + ATP = 4-CDP-2-C-methyl-D-erythritol 2-phosphate + ADP + H(+). The protein operates within isoprenoid biosynthesis; isopentenyl diphosphate biosynthesis via DXP pathway; isopentenyl diphosphate from 1-deoxy-D-xylulose 5-phosphate: step 3/6. Catalyzes the phosphorylation of the position 2 hydroxy group of 4-diphosphocytidyl-2C-methyl-D-erythritol. This chain is 4-diphosphocytidyl-2-C-methyl-D-erythritol kinase, found in Shewanella piezotolerans (strain WP3 / JCM 13877).